A 301-amino-acid polypeptide reads, in one-letter code: Possible hemolysin C (301 aa).

2 CBS domains span residues Met80–Leu142 and Leu145–Glu202.

It belongs to the UPF0053 family. Hemolysin C subfamily.

This Rickettsia akari (strain Hartford) protein is Possible hemolysin C (tlyC).